Reading from the N-terminus, the 333-residue chain is Chemokine XC receptor 1 (333 aa).

The Extracellular portion of the chain corresponds to methionine 1–threonine 31. Residues leucine 32–tyrosine 59 traverse the membrane as a helical segment. Residues glutamate 60–phenylalanine 69 are Cytoplasmic-facing. The helical transmembrane segment at isoleucine 70–serine 89 threads the bilayer. At proline 90–lysine 103 the chain is on the extracellular side. Cysteine 102 and cysteine 175 are oxidised to a cystine. Residues leucine 104–isoleucine 125 traverse the membrane as a helical segment. The Cytoplasmic portion of the chain corresponds to histidine 126–threonine 142. Residues leucine 143 to phenylalanine 167 traverse the membrane as a helical segment. Topologically, residues histidine 168–histidine 190 are extracellular. Residues asparagine 191–leucine 209 form a helical membrane-spanning segment. At arginine 210 to lysine 225 the chain is on the cytoplasmic side. Residues leucine 226–leucine 250 form a helical membrane-spanning segment. Residues phenylalanine 251–tyrosine 267 are Extracellular-facing. A helical transmembrane segment spans residues alanine 268–glycine 291. Residues valine 292 to tyrosine 333 lie on the Cytoplasmic side of the membrane.

It belongs to the G-protein coupled receptor 1 family.

The protein localises to the cell membrane. Functionally, receptor for chemokines SCYC1 and SCYC2. Subsequently transduces a signal by increasing the intracellular calcium ions level. Receptor for XCL1/Lymphotactin. This Homo sapiens (Human) protein is Chemokine XC receptor 1 (XCR1).